Here is a 118-residue protein sequence, read N- to C-terminus: Small ribosomal subunit protein uS10 (118 aa).

A Phosphoserine modification is found at Ser-37.

This sequence belongs to the universal ribosomal protein uS10 family. In terms of assembly, component of the small ribosomal subunit (SSU). Mature yeast ribosomes consist of a small (40S) and a large (60S) subunit. The 40S small subunit contains 1 molecule of ribosomal RNA (18S rRNA) and at least 33 different proteins. The large 60S subunit contains 3 rRNA molecules (25S, 5.8S and 5S rRNA) and at least 46 different proteins.

It localises to the cytoplasm. In terms of biological role, component of the ribosome, a large ribonucleoprotein complex responsible for the synthesis of proteins in the cell. The small ribosomal subunit (SSU) binds messenger RNAs (mRNAs) and translates the encoded message by selecting cognate aminoacyl-transfer RNA (tRNA) molecules. The large subunit (LSU) contains the ribosomal catalytic site termed the peptidyl transferase center (PTC), which catalyzes the formation of peptide bonds, thereby polymerizing the amino acids delivered by tRNAs into a polypeptide chain. The nascent polypeptides leave the ribosome through a tunnel in the LSU and interact with protein factors that function in enzymatic processing, targeting, and the membrane insertion of nascent chains at the exit of the ribosomal tunnel. This Schizosaccharomyces pombe (strain 972 / ATCC 24843) (Fission yeast) protein is Small ribosomal subunit protein uS10 (rps20).